A 305-amino-acid chain; its full sequence is MQKYDIKTFQGMILALQDYWAQNGCTIVQPLDMEVGAGTSHPMTCLRALGPEPMSTAYVQPSRRPTDGRYGENPNRLQHYYQFQVALKPSPDNIQELYLGSLEVLGIDPLVHDIRFVEDNWENPTLGAWGLGWEVWLNGMEVTQFTYFQQVGGLECKPVTGEITYGIERLAMYIQEVDSVYDLTWNIAPDGSKVTYGDIFHQNEVEQSTYNFEHADVDFLFSFFEQCEKECQQLLELEKPLPLPAYERILKAAHAFNLLDARKAISVTERQRYILRIRNLTKSVAEAYYASREALGFPMCKKEQA.

The protein belongs to the class-II aminoacyl-tRNA synthetase family. In terms of assembly, tetramer of two alpha and two beta subunits.

The protein localises to the cytoplasm. It carries out the reaction tRNA(Gly) + glycine + ATP = glycyl-tRNA(Gly) + AMP + diphosphate. The chain is Glycine--tRNA ligase alpha subunit from Vibrio vulnificus (strain CMCP6).